A 189-amino-acid polypeptide reads, in one-letter code: dTTP/UTP pyrophosphatase (189 aa).

Asp71 serves as the catalytic Proton acceptor.

Belongs to the Maf family. YhdE subfamily. A divalent metal cation is required as a cofactor.

The protein localises to the cytoplasm. The enzyme catalyses dTTP + H2O = dTMP + diphosphate + H(+). It carries out the reaction UTP + H2O = UMP + diphosphate + H(+). Nucleoside triphosphate pyrophosphatase that hydrolyzes dTTP and UTP. May have a dual role in cell division arrest and in preventing the incorporation of modified nucleotides into cellular nucleic acids. The polypeptide is dTTP/UTP pyrophosphatase (Pseudoalteromonas translucida (strain TAC 125)).